The primary structure comprises 976 residues: Vacuolar membrane protease (976 aa).

Residues 1 to 15 are Cytoplasmic-facing; it reads MKLKSVFRSVLKYRK. A helical membrane pass occupies residues 16-36; sequence TNLSLLLLITYSIITLLYIFD. At 37-359 the chain is on the vacuolar side; sequence HERYKLNLPK…KFFVISAKTL (323 aa). Asparagine 96 and asparagine 121 each carry an N-linked (GlcNAc...) asparagine glycan. Positions 156 and 168 each coordinate Zn(2+). A glycan (N-linked (GlcNAc...) asparagine) is linked at asparagine 189. The active-site Proton acceptor is the glutamate 200. Position 201 (glutamate 201) interacts with Zn(2+). Residues asparagine 212 and asparagine 217 are each glycosylated (N-linked (GlcNAc...) asparagine). Glutamate 226 and histidine 300 together coordinate Zn(2+). Residues 360 to 380 traverse the membrane as a helical segment; sequence FYWNCIFLLVSPVVAIGLYLI. The Cytoplasmic portion of the chain corresponds to 381-392; it reads SRDRMTWKSHSW. The chain crosses the membrane as a helical span at residues 393–412; the sequence is LSWTRFPLSLAAGIIVQKLF. The Vacuolar portion of the chain corresponds to 413 to 428; that stretch reads SNDIIRSNPLTFSRNY. Residues 429 to 449 form a helical membrane-spanning segment; it reads FWPISAFFTQVIFTSYVLINC. Topologically, residues 450 to 461 are cytoplasmic; sequence SNFFFPCADMKS. A helical membrane pass occupies residues 462–482; it reads LSIIELFIILWTILLFTSKLL. The Vacuolar segment spans residues 483–496; sequence YSSDYRYTGLYPLS. The helical transmembrane segment at 497–517 threads the bilayer; the sequence is IFFLLSTIAAILRLLALALGM. Over 518–627 the chain is Cytoplasmic; it reads RTRKRLGREC…NSLKLEYTDY (110 aa). The disordered stretch occupies residues 528-610; that stretch reads RDHHSNYSSH…PLLKGSNSME (83 aa). Positions 549–558 are enriched in polar residues; it reads NLEQPQDQFT. Over residues 559–570 the composition is skewed to low complexity; sequence SSQDDQASIQDD. The segment covering 582–601 has biased composition (basic and acidic residues); that stretch reads NVDEDHGMDSSSQQHDERVP. Residues 628-648 form a helical membrane-spanning segment; that stretch reads AWIIQFLLIVPIPSFILFNSV. Over 649–668 the chain is Vacuolar; sequence DVIMDALNHTVQEGSKATFD. Asparagine 656 carries an N-linked (GlcNAc...) asparagine glycan. The helical transmembrane segment at 669–689 threads the bilayer; sequence VLRFGMVGSILMALPILPFFY. Residues 690–692 are Cytoplasmic-facing; the sequence is KVN. Residues 693 to 713 traverse the membrane as a helical segment; sequence YITISLTALLFLISASKTLLV. Residues 714–976 lie on the Vacuolar side of the membrane; the sequence is HPFTNSNPLK…LVIVKDAIIL (263 aa). N-linked (GlcNAc...) asparagine glycans are attached at residues asparagine 768, asparagine 796, asparagine 811, asparagine 866, and asparagine 937.

It belongs to the peptidase M28 family. Zn(2+) is required as a cofactor.

The protein resides in the vacuole membrane. In terms of biological role, may be involved in vacuolar sorting and osmoregulation. This Saccharomyces cerevisiae (strain AWRI1631) (Baker's yeast) protein is Vacuolar membrane protease.